The sequence spans 125 residues: uncharacterized protein (125 aa).

Residues 1 to 21 (MLFYHCSSFSSSSSSSSSSAS) are disordered. Over residues 7–21 (SSFSSSSSSSSSSAS) the composition is skewed to low complexity.

This is an uncharacterized protein from Saccharomyces cerevisiae (strain ATCC 204508 / S288c) (Baker's yeast).